The following is a 413-amino-acid chain: L-cysteine:1D-myo-inositol 2-amino-2-deoxy-alpha-D-glucopyranoside ligase (413 aa).

Residues 1 to 21 form a disordered region; that stretch reads MQSWSDTALPSVPGQGPPLRL. Cysteine 43 is a binding site for Zn(2+). L-cysteinyl-5'-AMP is bound by residues 43-46, threonine 58, and 81-83; these read CGIT and NVT. The 'HIGH' region motif lies at 45–55; that stretch reads ITPYDATHLGH. The short motif at 187–192 is the 'ERGGDP' region element; that stretch reads ERGGDP. Residue tryptophan 227 participates in L-cysteinyl-5'-AMP binding. Cysteine 231 serves as a coordination point for Zn(2+). 249–251 is a binding site for L-cysteinyl-5'-AMP; that stretch reads GSD. Residue histidine 256 participates in Zn(2+) binding. Residue isoleucine 283 coordinates L-cysteinyl-5'-AMP. The 'KMSKS' region signature appears at 289–293; it reads KMSKS.

It belongs to the class-I aminoacyl-tRNA synthetase family. MshC subfamily. As to quaternary structure, monomer. Zn(2+) is required as a cofactor.

It carries out the reaction 1D-myo-inositol 2-amino-2-deoxy-alpha-D-glucopyranoside + L-cysteine + ATP = 1D-myo-inositol 2-(L-cysteinylamino)-2-deoxy-alpha-D-glucopyranoside + AMP + diphosphate + H(+). Its function is as follows. Catalyzes the ATP-dependent condensation of GlcN-Ins and L-cysteine to form L-Cys-GlcN-Ins. In Rhodococcus erythropolis (strain PR4 / NBRC 100887), this protein is L-cysteine:1D-myo-inositol 2-amino-2-deoxy-alpha-D-glucopyranoside ligase.